We begin with the raw amino-acid sequence, 290 residues long: Fructose-1,6-bisphosphatase class 1 (290 aa).

Mg(2+)-binding residues include Glu-78, Asp-96, Leu-98, and Asp-99. Substrate is bound by residues 99–102 (DGSS), Tyr-201, and Lys-226. A Mg(2+)-binding site is contributed by Glu-232.

The protein belongs to the FBPase class 1 family. In terms of assembly, homotetramer. It depends on Mg(2+) as a cofactor.

It localises to the cytoplasm. It carries out the reaction beta-D-fructose 1,6-bisphosphate + H2O = beta-D-fructose 6-phosphate + phosphate. The protein operates within carbohydrate biosynthesis; gluconeogenesis. This chain is Fructose-1,6-bisphosphatase class 1, found in Helicobacter acinonychis (strain Sheeba).